The primary structure comprises 120 residues: Large ribosomal subunit protein eL8 (120 aa).

It belongs to the eukaryotic ribosomal protein eL8 family. In terms of assembly, part of the 50S ribosomal subunit. Probably part of the RNase P complex.

The protein resides in the cytoplasm. In terms of biological role, multifunctional RNA-binding protein that recognizes the K-turn motif in ribosomal RNA, the RNA component of RNase P, box H/ACA, box C/D and box C'/D' sRNAs. The protein is Large ribosomal subunit protein eL8 of Halorubrum lacusprofundi (strain ATCC 49239 / DSM 5036 / JCM 8891 / ACAM 34).